The primary structure comprises 214 residues: Pyridoxine/pyridoxamine 5'-phosphate oxidase (214 aa).

Residues 8-11 and Lys-66 each bind substrate; that span reads RINY. FMN contacts are provided by residues 61-66, 76-77, Arg-82, Lys-83, and Gln-105; these read RIVLIK and FT. Residues Tyr-123, Arg-127, and Ser-131 each contribute to the substrate site. Residues 140–141 and Trp-184 contribute to the FMN site; that span reads QS. Residue 190–192 participates in substrate binding; sequence RLH. Arg-194 is an FMN binding site.

This sequence belongs to the pyridoxamine 5'-phosphate oxidase family. Homodimer. The cofactor is FMN.

The enzyme catalyses pyridoxamine 5'-phosphate + O2 + H2O = pyridoxal 5'-phosphate + H2O2 + NH4(+). It catalyses the reaction pyridoxine 5'-phosphate + O2 = pyridoxal 5'-phosphate + H2O2. It participates in cofactor metabolism; pyridoxal 5'-phosphate salvage; pyridoxal 5'-phosphate from pyridoxamine 5'-phosphate: step 1/1. Its pathway is cofactor metabolism; pyridoxal 5'-phosphate salvage; pyridoxal 5'-phosphate from pyridoxine 5'-phosphate: step 1/1. Catalyzes the oxidation of either pyridoxine 5'-phosphate (PNP) or pyridoxamine 5'-phosphate (PMP) into pyridoxal 5'-phosphate (PLP). This Burkholderia lata (strain ATCC 17760 / DSM 23089 / LMG 22485 / NCIMB 9086 / R18194 / 383) protein is Pyridoxine/pyridoxamine 5'-phosphate oxidase.